The primary structure comprises 257 residues: Gamma-secretase subunit APH-1B (257 aa).

7 consecutive transmembrane segments (helical) span residues 5 to 25 (VFFGCAFIAFGPALALYVFTI), 32 to 52 (IIFLIAGAFFWLVSLLISSLV), 71 to 91 (LLIFGAFVSVYIQEMFRFAYY), 115 to 135 (LLAYVSGLGFGIMSGVFSFVN), 158 to 178 (YSAFMTLVIILLHVFWGIVFF), 186 to 206 (WGILLIVLLTHLLVSAQTFIS), and 213 to 233 (LASAFIILVLMGTWAFLAAGG).

It belongs to the APH-1 family. As to quaternary structure, probable component of the gamma-secretase complex, a complex composed of a presenilin homodimer (PSEN1 or PSEN2), nicastrin (NCSTN), APH1 (APH1A or APH1B) and PEN2. Such minimal complex is sufficient for secretase activity, although other components may exist. Interacts with PSEN1 and PSEN2. In terms of tissue distribution, weakly or not expressed in leukocytes, lung, placenta, small intestine, liver, kidney, spleen thymus, colon, skeletal muscle, heart and brain.

It localises to the membrane. Functionally, probable subunit of the gamma-secretase complex, an endoprotease complex that catalyzes the intramembrane cleavage of integral proteins such as Notch receptors and APP (amyloid-beta precursor protein). It probably represents a stabilizing cofactor for the presenilin homodimer that promotes the formation of a stable complex. Probably present in a minority of gamma-secretase complexes compared to APH1A. This Homo sapiens (Human) protein is Gamma-secretase subunit APH-1B (APH1B).